The following is a 238-amino-acid chain: Ion-translocating oxidoreductase complex subunit E (238 aa).

Helical transmembrane passes span Leu41–Val61, Leu71–Ala91, Glu95–Gly115, Ser130–Leu150, and Gly184–Leu204.

Belongs to the NqrDE/RnfAE family. In terms of assembly, the complex is composed of six subunits: RnfA, RnfB, RnfC, RnfD, RnfE and RnfG.

The protein localises to the cell inner membrane. Functionally, part of a membrane-bound complex that couples electron transfer with translocation of ions across the membrane. The polypeptide is Ion-translocating oxidoreductase complex subunit E (Pseudomonas aeruginosa (strain LESB58)).